We begin with the raw amino-acid sequence, 147 residues long: MPGGGVTVKDVNQQEFVRALAAFLKKSGKLKVPDWVDIVKLAKHKELAPCDDNWFYIRAASTVRHLYLRGGVGVGSMIKIYGGRKRNGVCPSHFSVGSKNVARKVLQALEALKMVEKDPNGGRRLTPQGTRDLDRIAGQVAAASKKS.

It belongs to the eukaryotic ribosomal protein eS19 family. As to quaternary structure, component of the small ribosomal subunit.

It localises to the cytoplasm. The protein localises to the nucleus. Component of the small ribosomal subunit. The ribosome is a large ribonucleoprotein complex responsible for the synthesis of proteins in the cell. Required for pre-rRNA processing and maturation of 40S ribosomal subunits. The polypeptide is Small ribosomal subunit protein eS19 (rps19) (Ictalurus punctatus (Channel catfish)).